Consider the following 179-residue polypeptide: Replication restart protein DnaT (179 aa).

Positions 156–179 (GGLPKRDVNTVSEPDSQIPPGFRG) are disordered.

It belongs to the DnaT family. Homooligomerizes. Interacts with PriB. Component of the replication restart primosome. Primosome assembly occurs via a 'hand-off' mechanism. PriA binds to replication forks, subsequently PriB then DnaT bind; DnaT then displaces ssDNA to generate the helicase loading substrate.

Involved in the restart of stalled replication forks, which reloads the replicative helicase on sites other than the origin of replication. Can function in multiple replication restart pathways. Displaces ssDNA from a PriB-ssDNA complex. Probably forms a spiral filament on ssDNA. The chain is Replication restart protein DnaT from Escherichia coli O17:K52:H18 (strain UMN026 / ExPEC).